The sequence spans 387 residues: ERBB-3 BINDING PROTEIN 1 (387 aa).

2 necessary for nucleolar localization regions span residues 1 to 49 (MSDD…IVDL) and 297 to 387 (LLQP…PMEG). An RNA-binding region spans residues 47 to 55 (VDLCEKGDA). The disordered stretch occupies residues 337–387 (LQPTKTTENEPEIKAWLALPTKTKKKGGGKKKKGKKGDKVEEASQAEPMEG). Positions 356–373 (PTKTKKKGGGKKKKGKKG) are interaction with RNA. A compositionally biased stretch (basic residues) spans 358–372 (KTKKKGGGKKKKGKK). Positions 360 to 369 (KKKGGGKKKK) match the Nuclear localization signal motif.

It belongs to the peptidase M24 family. Component of a ribonucleoprotein complex. In terms of tissue distribution, expressed during tuberisation and in roots, nodes, internodes, petioles, leaves, stolons, tubers and sprouts.

It localises to the nucleus. In terms of biological role, binds RNA. Associates with 28S, 18S and 5.8S mature rRNAs, several rRNA precursors and probably U3 small nucleolar RNA. May be involved in regulation of intermediate and late steps of rRNA processing. May be involved in ribosome assembly. Required for expression of cell cycle genes such as CYCD3-1, RNR2A and CDKB1-1. Promotes, in a dose- and auxin-dependent manner, organ growth by stimulating both cell proliferation and expansion, via the regulation of RBR1 levels. This chain is ERBB-3 BINDING PROTEIN 1, found in Solanum tuberosum (Potato).